The following is a 155-amino-acid chain: Ribosomal RNA large subunit methyltransferase H (155 aa).

Residues Leu72, Gly103, and Leu122 to Leu127 each bind S-adenosyl-L-methionine.

It belongs to the RNA methyltransferase RlmH family. As to quaternary structure, homodimer.

It localises to the cytoplasm. It carries out the reaction pseudouridine(1915) in 23S rRNA + S-adenosyl-L-methionine = N(3)-methylpseudouridine(1915) in 23S rRNA + S-adenosyl-L-homocysteine + H(+). In terms of biological role, specifically methylates the pseudouridine at position 1915 (m3Psi1915) in 23S rRNA. This is Ribosomal RNA large subunit methyltransferase H from Salmonella dublin (strain CT_02021853).